The following is a 211-amino-acid chain: Thiamine-phosphate synthase (211 aa).

4-amino-2-methyl-5-(diphosphooxymethyl)pyrimidine contacts are provided by residues 41 to 45 (QYRDK) and Asn-73. Positions 74 and 93 each coordinate Mg(2+). Thr-112 provides a ligand contact to 4-amino-2-methyl-5-(diphosphooxymethyl)pyrimidine. 2-[(2R,5Z)-2-carboxy-4-methylthiazol-5(2H)-ylidene]ethyl phosphate is bound at residue 139–141 (SPT). Lys-142 contributes to the 4-amino-2-methyl-5-(diphosphooxymethyl)pyrimidine binding site. Residues Gly-169 and 189-190 (VS) each bind 2-[(2R,5Z)-2-carboxy-4-methylthiazol-5(2H)-ylidene]ethyl phosphate.

It belongs to the thiamine-phosphate synthase family. Mg(2+) serves as cofactor.

It catalyses the reaction 2-[(2R,5Z)-2-carboxy-4-methylthiazol-5(2H)-ylidene]ethyl phosphate + 4-amino-2-methyl-5-(diphosphooxymethyl)pyrimidine + 2 H(+) = thiamine phosphate + CO2 + diphosphate. The catalysed reaction is 2-(2-carboxy-4-methylthiazol-5-yl)ethyl phosphate + 4-amino-2-methyl-5-(diphosphooxymethyl)pyrimidine + 2 H(+) = thiamine phosphate + CO2 + diphosphate. The enzyme catalyses 4-methyl-5-(2-phosphooxyethyl)-thiazole + 4-amino-2-methyl-5-(diphosphooxymethyl)pyrimidine + H(+) = thiamine phosphate + diphosphate. Its pathway is cofactor biosynthesis; thiamine diphosphate biosynthesis; thiamine phosphate from 4-amino-2-methyl-5-diphosphomethylpyrimidine and 4-methyl-5-(2-phosphoethyl)-thiazole: step 1/1. Its function is as follows. Condenses 4-methyl-5-(beta-hydroxyethyl)thiazole monophosphate (THZ-P) and 2-methyl-4-amino-5-hydroxymethyl pyrimidine pyrophosphate (HMP-PP) to form thiamine monophosphate (TMP). The protein is Thiamine-phosphate synthase of Thioalkalivibrio sulfidiphilus (strain HL-EbGR7).